A 645-amino-acid chain; its full sequence is Sister chromatid cohesion protein 1 (645 aa).

Disordered stretches follow at residues 292–311, 495–527, and 619–645; these read FEPENVEPSRPQSPESFALE, QSGFAGENKENEDAEDWSDPFGSSNSSRRGQLE, and CPLSSPKPMGLGNTMENSTMRTPMRPV.

It belongs to the rad21 family. In terms of assembly, component of the cohesin complex, composed of the smc-1 and smc-3 heterodimer attached via their hinge domain, scc-1 which links them, and scc-3. Interacts with smc-1, smc-3, scc-3 and tim-1.

The protein localises to the nucleus. The protein resides in the chromosome. It localises to the cytoplasm. Cleavable component of the cohesin complex involved in chromosome cohesion during cell cycle. The cohesin complex is required for the cohesion of sister chromatids after DNA replication. The cohesin complex apparently forms a large proteinaceous ring within which sister chromatids can be trapped. At metaphase-anaphase transition, this protein is cleaved and dissociates from chromatin, allowing sister chromatids to segregate. The protein is Sister chromatid cohesion protein 1 of Caenorhabditis elegans.